Reading from the N-terminus, the 136-residue chain is SPbeta prophage-derived uncharacterized protein YonI (136 aa).

The protein is SPbeta prophage-derived uncharacterized protein YonI (yonI) of Bacillus subtilis (strain 168).